We begin with the raw amino-acid sequence, 488 residues long: R3H and coiled-coil domain-containing protein 1 (488 aa).

The region spanning 16–81 (NDFVHRVQEE…KRRTVICHLD (66 aa)) is the R3H domain. Disordered regions lie at residues 87–180 (SDGP…GDAE) and 195–322 (KSPD…DADH). Positions 114-125 (GAAAGPRGAPAG) are enriched in low complexity. The residue at position 232 (Ser-232) is a Phosphoserine. Residues 244–321 (SHGMRSLVDQ…EEDEDEADAD (78 aa)) adopt a coiled-coil conformation. Over residues 252 to 265 (DQEEEEIEGEEEEK) the composition is skewed to acidic residues. Composition is skewed to basic and acidic residues over residues 266-280 (VDEKEEDTGKQKERV) and 287-301 (TDAQEGKVDSEGERM). Over residues 302 to 319 (DEGEDKVDAEEEDEDEAD) the composition is skewed to acidic residues.

The polypeptide is R3H and coiled-coil domain-containing protein 1 (Mus musculus (Mouse)).